A 92-amino-acid polypeptide reads, in one-letter code: Small ribosomal subunit protein uS19 (92 aa).

Belongs to the universal ribosomal protein uS19 family.

In terms of biological role, protein S19 forms a complex with S13 that binds strongly to the 16S ribosomal RNA. The chain is Small ribosomal subunit protein uS19 from Exiguobacterium sibiricum (strain DSM 17290 / CCUG 55495 / CIP 109462 / JCM 13490 / 255-15).